A 428-amino-acid chain; its full sequence is Cell division protein FtsZ (428 aa).

Residues 73–77, 160–162, glutamate 191, arginine 195, and aspartate 239 each bind GTP; these read GGGGN and GTG. A disordered region spans residues 378–428; it reads NAANARVVSAPPKRTPTQTPLTNSPAPTPEPKEKSGLDIPDFLQRRRPPKN. Residues 392–402 show a composition bias toward polar residues; it reads TPTQTPLTNSP.

This sequence belongs to the FtsZ family. In terms of assembly, homodimer. Polymerizes to form a dynamic ring structure in a strictly GTP-dependent manner. Interacts directly with several other division proteins.

It is found in the cytoplasm. In terms of biological role, essential cell division protein that forms a contractile ring structure (Z ring) at the future cell division site. The regulation of the ring assembly controls the timing and the location of cell division. One of the functions of the FtsZ ring is to recruit other cell division proteins to the septum to produce a new cell wall between the dividing cells. Binds GTP and shows GTPase activity. This is Cell division protein FtsZ from Nostoc sp. (strain PCC 7120 / SAG 25.82 / UTEX 2576).